The following is a 428-amino-acid chain: Elongation factor 1-alpha (428 aa).

In terms of domain architecture, tr-type G spans 5-225; it reads KPVLNVAFIG…DKFQPPEKPT (221 aa). A G1 region spans residues 14 to 21; sequence GHVDAGKS. 14–21 provides a ligand contact to GTP; it reads GHVDAGKS. Ser-21 is a binding site for Mg(2+). The tract at residues 70–74 is G2; the sequence is GVTID. A G3 region spans residues 91 to 94; the sequence is DCPG. Residues 91–95 and 149–152 contribute to the GTP site; these read DCPGH and NKMD. A G4 region spans residues 149-152; the sequence is NKMD. The segment at 189-191 is G5; sequence ASL.

This sequence belongs to the TRAFAC class translation factor GTPase superfamily. Classic translation factor GTPase family. EF-Tu/EF-1A subfamily.

It localises to the cytoplasm. It catalyses the reaction GTP + H2O = GDP + phosphate + H(+). Functionally, GTP hydrolase that promotes the GTP-dependent binding of aminoacyl-tRNA to the A-site of ribosomes during protein biosynthesis. This chain is Elongation factor 1-alpha, found in Methanocaldococcus jannaschii (strain ATCC 43067 / DSM 2661 / JAL-1 / JCM 10045 / NBRC 100440) (Methanococcus jannaschii).